The following is a 134-amino-acid chain: Holo-[acyl-carrier-protein] synthase (134 aa).

Residues D8 and E57 each coordinate Mg(2+).

It belongs to the P-Pant transferase superfamily. AcpS family. Mg(2+) serves as cofactor.

Its subcellular location is the cytoplasm. It carries out the reaction apo-[ACP] + CoA = holo-[ACP] + adenosine 3',5'-bisphosphate + H(+). Functionally, transfers the 4'-phosphopantetheine moiety from coenzyme A to a Ser of acyl-carrier-protein. This chain is Holo-[acyl-carrier-protein] synthase, found in Rhizobium rhizogenes (strain K84 / ATCC BAA-868) (Agrobacterium radiobacter).